We begin with the raw amino-acid sequence, 206 residues long: N-(5'-phosphoribosyl)anthranilate isomerase (206 aa).

The protein belongs to the TrpF family.

The catalysed reaction is N-(5-phospho-beta-D-ribosyl)anthranilate = 1-(2-carboxyphenylamino)-1-deoxy-D-ribulose 5-phosphate. It participates in amino-acid biosynthesis; L-tryptophan biosynthesis; L-tryptophan from chorismate: step 3/5. This Chlamydia caviae (strain ATCC VR-813 / DSM 19441 / 03DC25 / GPIC) (Chlamydophila caviae) protein is N-(5'-phosphoribosyl)anthranilate isomerase.